The sequence spans 292 residues: Pyridoxal 5'-phosphate synthase subunit PdxS (292 aa).

D22 contacts D-ribose 5-phosphate. The active-site Schiff-base intermediate with D-ribose 5-phosphate is the K79. G151 contributes to the D-ribose 5-phosphate binding site. A D-glyceraldehyde 3-phosphate-binding site is contributed by R163. D-ribose 5-phosphate is bound by residues G212 and G233–S234.

Belongs to the PdxS/SNZ family. In terms of assembly, in the presence of PdxT, forms a dodecamer of heterodimers.

It carries out the reaction aldehydo-D-ribose 5-phosphate + D-glyceraldehyde 3-phosphate + L-glutamine = pyridoxal 5'-phosphate + L-glutamate + phosphate + 3 H2O + H(+). Its pathway is cofactor biosynthesis; pyridoxal 5'-phosphate biosynthesis. Its function is as follows. Catalyzes the formation of pyridoxal 5'-phosphate from ribose 5-phosphate (RBP), glyceraldehyde 3-phosphate (G3P) and ammonia. The ammonia is provided by the PdxT subunit. Can also use ribulose 5-phosphate and dihydroxyacetone phosphate as substrates, resulting from enzyme-catalyzed isomerization of RBP and G3P, respectively. This is Pyridoxal 5'-phosphate synthase subunit PdxS from Caldanaerobacter subterraneus subsp. tengcongensis (strain DSM 15242 / JCM 11007 / NBRC 100824 / MB4) (Thermoanaerobacter tengcongensis).